We begin with the raw amino-acid sequence, 79 residues long: Acyl carrier protein (79 aa).

The Carrier domain maps to 2–77 (SDIEARVRKI…SAIDYANTHQ (76 aa)). Position 37 is an O-(pantetheine 4'-phosphoryl)serine (Ser37).

The protein belongs to the acyl carrier protein (ACP) family. 4'-phosphopantetheine is transferred from CoA to a specific serine of apo-ACP by AcpS. This modification is essential for activity because fatty acids are bound in thioester linkage to the sulfhydryl of the prosthetic group.

Its subcellular location is the cytoplasm. It participates in lipid metabolism; fatty acid biosynthesis. Carrier of the growing fatty acid chain in fatty acid biosynthesis. This chain is Acyl carrier protein, found in Verminephrobacter eiseniae (strain EF01-2).